The primary structure comprises 208 residues: Protein GrpE (208 aa).

Residues Met1–Thr12 show a composition bias toward basic and acidic residues. The segment at Met1–Lys59 is disordered. Over residues Glu13–Gln23 the composition is skewed to polar residues. The span at Glu42–Glu55 shows a compositional bias: acidic residues.

The protein belongs to the GrpE family. Homodimer.

The protein resides in the cytoplasm. Its function is as follows. Participates actively in the response to hyperosmotic and heat shock by preventing the aggregation of stress-denatured proteins, in association with DnaK and GrpE. It is the nucleotide exchange factor for DnaK and may function as a thermosensor. Unfolded proteins bind initially to DnaJ; upon interaction with the DnaJ-bound protein, DnaK hydrolyzes its bound ATP, resulting in the formation of a stable complex. GrpE releases ADP from DnaK; ATP binding to DnaK triggers the release of the substrate protein, thus completing the reaction cycle. Several rounds of ATP-dependent interactions between DnaJ, DnaK and GrpE are required for fully efficient folding. In Staphylococcus aureus (strain Mu3 / ATCC 700698), this protein is Protein GrpE.